The primary structure comprises 864 residues: MAEMEKEGRPPENKRSRKPAHPVKREINEEMKNFAENTMNELLGWYGYDKVELKDGEDIEFRSYTTDGESRQHISVLKENSLPKPKLPEDSVISSYNISTGYSGLATGNGLSDSPAGSKDHGNVPIIVPLIPPPFIKPPAEDEVSNVQIMCAWCQKVGIKRYSLSMGSEVKSFCSEKCFAACRRAYFKRNKARDEDGHAESFPQQHYAKETPRLAFKNNCELLVCDWCKHIRHTKEYLDFGDGERRLQFCSAKCLNQYKMDIFYKETQANLPAGLCGTLHPHMESKAEGTGVQLLTPDSWNIPLTDARRKAPSPVAAAGQSQGPGPSSSTTVSPSDTANCSVTKIPTPVPKSLPISETPSIPPVSVQPPASIGPPLGVPPRSPPMVMTNRGPVPLPIFMEQQIIQQIRPPFIRGPPHHASNPNSPLSNPMLPGIGPPPGGPRNLGPTSSPMHRPMLSPHIHPPSTPTMPGNPPGLLPPPPPGAPLPSLPFPPVSMMPNGPMPVPQMMNFGLPSLAPLVPPPTLLVPYPVIVPLPVPIPIPIPIPHVNDSKPPNGFSSNGESFVPSAPGDSSAAGGKAGGRSLSPRDSKQGSSKSADSPPGSSGQALSLAPSERGRGEVVDLTRRAASPAGAGGQPGFAGVLHGPQDGVIDLTVGHRARLHNVIHRALHAHVKAEREPGAAERRTCGGCRDGHCSPPAAGDPGPGAPAGPEAAAACNVIVNGTRSAPAEAKGAEPPPEQPPPPAPPKKLLSPEEPAVNELESVKENNCASNCHLDGEVTKKLMGEEALAGGDKSDPNLNNPADEDHAYALRMLPKTGCVIQPVPKPAEKAAMTPCVISSPMLSAGPEDLEPPLKRRCLRIRNQNK.

A compositionally biased stretch (basic and acidic residues) spans 1 to 14 (MAEMEKEGRPPENK). The disordered stretch occupies residues 1–25 (MAEMEKEGRPPENKRSRKPAHPVKR). 2 consecutive FCS-type zinc fingers follow at residues 142–180 (DEVSNVQIMCAWCQKVGIKRYSLSMGSEVKSFCSEKCFA) and 216–256 (FKNN…KCLN). 3 disordered regions span residues 304–360 (LTDA…ETPS), 413–484 (RGPP…PGAP), and 550–616 (KPPN…RGRG). Composition is skewed to low complexity over residues 314–335 (PVAAAGQSQGPGPSSSTTVSPS) and 417–433 (HHASNPNSPLSNPMLPG). A compositionally biased stretch (pro residues) spans 460–484 (IHPPSTPTMPGNPPGLLPPPPPGAP). 2 stretches are compositionally biased toward low complexity: residues 565–582 (SAPGDSSAAGGKAGGRSL) and 590–603 (GSSKSADSPPGSSG). The short motif at 618-622 (VVDLT) is the SUMO interaction motif 1 (SIM); mediates the binding to polysumoylated substrates element. Serine 627 carries the post-translational modification Phosphoserine. An SUMO interaction motif 2 (SIM); mediates the binding to polysumoylated substrates motif is present at residues 648 to 652 (VIDLT). Lysine 672 participates in a covalent cross-link: Glycyl lysine isopeptide (Lys-Gly) (interchain with G-Cter in SUMO2). Serine 694 bears the Phosphoserine mark. Residues 725–750 (APAEAKGAEPPPEQPPPPAPPKKLLS) are disordered. A compositionally biased stretch (pro residues) spans 733–745 (EPPPEQPPPPAPP).

Belongs to the SOBP family. As to quaternary structure, interacts (via SIM domains) with SUMO1 and SUMO2.

In terms of biological role, implicated in development of the cochlea. This Rattus norvegicus (Rat) protein is Sine oculis-binding protein homolog.